The chain runs to 274 residues: MSASSIARTVYIVSDSTGITAETFSQSVLSQFDQVDFKPIRLPFIDTLQKAEETAERINKNAADTGVPPIVFSTLVNPEILARVRQANGVFLDLFGTFVSHIEQALGLKSSPSIGRSHMQADSEKYRNRIDAINFSLAHDDGQFVNQLDQADVILVGVSRCGKTPTSLYLAMQYAIKAANFPLTPDDFERSSLPKTIAPYRDKLFGLSIQPERLSEVRNERRPNSRYATIEQCRYEVAEAERMMRRAGISWLSTTTKSIEEIATTVLQEVGLGR.

Position 157 to 164 (157 to 164 (GVSRCGKT)) interacts with ADP.

Belongs to the pyruvate, phosphate/water dikinase regulatory protein family. PSRP subfamily.

The catalysed reaction is [pyruvate, water dikinase] + ADP = [pyruvate, water dikinase]-phosphate + AMP + H(+). It carries out the reaction [pyruvate, water dikinase]-phosphate + phosphate + H(+) = [pyruvate, water dikinase] + diphosphate. In terms of biological role, bifunctional serine/threonine kinase and phosphorylase involved in the regulation of the phosphoenolpyruvate synthase (PEPS) by catalyzing its phosphorylation/dephosphorylation. The polypeptide is Putative phosphoenolpyruvate synthase regulatory protein (Bordetella avium (strain 197N)).